The primary structure comprises 282 residues: Biotin synthase (282 aa).

Residues 1 to 228 enclose the Radical SAM core domain; it reads MQEIFLCSIS…NARLMVAGGR (228 aa). [4Fe-4S] cluster contacts are provided by cysteine 17, cysteine 21, and cysteine 24. [2Fe-2S] cluster-binding residues include cysteine 61, cysteine 96, cysteine 154, and arginine 221.

This sequence belongs to the radical SAM superfamily. Biotin synthase family. In terms of assembly, homodimer. [4Fe-4S] cluster is required as a cofactor. Requires [2Fe-2S] cluster as cofactor.

The enzyme catalyses (4R,5S)-dethiobiotin + (sulfur carrier)-SH + 2 reduced [2Fe-2S]-[ferredoxin] + 2 S-adenosyl-L-methionine = (sulfur carrier)-H + biotin + 2 5'-deoxyadenosine + 2 L-methionine + 2 oxidized [2Fe-2S]-[ferredoxin]. It functions in the pathway cofactor biosynthesis; biotin biosynthesis; biotin from 7,8-diaminononanoate: step 2/2. Catalyzes the conversion of dethiobiotin (DTB) to biotin by the insertion of a sulfur atom into dethiobiotin via a radical-based mechanism. The polypeptide is Biotin synthase (Helicobacter pylori (strain G27)).